We begin with the raw amino-acid sequence, 42 residues long: Daisho1 (42 aa).

Positions 1–20 (MKFFQAAALLLAMFAALANA) are cleaved as a signal peptide. Residues 21–26 (EPVPQP) constitute a propeptide, removed by a dipeptidylpeptidase. Thr41 carries the post-translational modification Threonine amide.

As to expression, hemolymph (at protein level).

It localises to the secreted. Its function is as follows. Peptide which plays a role in the humoral immune response to a subset of filamentous fungi, including F.oxysporum and F.verticillioides. This is Daisho1 from Drosophila melanogaster (Fruit fly).